A 244-amino-acid polypeptide reads, in one-letter code: MGDLFSLFWEVDPPPIPVNCAIPNQDYECWKDDSCGTIGSFLLWYFVIVFVLMFFSRASVWMSEDKKDEGSGTSTSVRKASKETSCKRQSKDSAWDPSQTMKKPKQNQLTPVTNSEVALVNAYPEQRRARRQSQFNEVNQNQHDSDTTEYGSEESNSEASSWKESESEHHPSPDSIKRRKMAQRQRNLGSYQMSERHCLHCKALRTNEWLAHHSRQKPSVTPPMKRDSQEESSISDINKKFSKF.

The chain crosses the membrane as a helical span at residues Cys35–Phe55. Disordered regions lie at residues Asp65 to Asn114, Gln126 to Tyr191, and Leu210 to Phe244. A compositionally biased stretch (basic and acidic residues) spans Ala80–Ala94. Composition is skewed to polar residues over residues Asp96–Asn114 and Gln132–Gln142. A compositionally biased stretch (basic and acidic residues) spans Ser161–Ile176.

Its subcellular location is the membrane. The polypeptide is Serine-rich single-pass membrane protein 1 (SSMEM1) (Homo sapiens (Human)).